The primary structure comprises 1264 residues: Phosphatidylinositol 3,4,5-trisphosphate 5-phosphatase 2 (1264 aa).

An SH2 domain is found at 26 to 122 (WYHRDLSRAA…GLVCALLLPV (97 aa)). A compositionally biased stretch (basic and acidic residues) spans 124–137 (REREPDPPDDRDVS). Positions 124 to 182 (REREPDPPDDRDVSDGEDEKPPLPPRSGSTSISAPVGPGSPPAAPETPTTPAAESAPNG) are disordered. S137 is subject to Phosphoserine. A compositionally biased stretch (low complexity) spans 169-180 (ETPTTPAAESAP). T170 carries the phosphothreonine modification. A phosphoserine mark is found at S246 and S358. Y892 is modified (phosphotyrosine). S896 carries the post-translational modification Phosphoserine. Positions 903 to 1123 (GAKSKAPSVS…TFLGEVASGD (221 aa)) are disordered. The span at 944–954 (PPPTGRPPAPP) shows a compositional bias: pro residues. An SH3-binding motif is present at residues 950-955 (PPAPPR). Positions 957–971 (ASREEPLTPRLKAEG) are enriched in basic and acidic residues. The residue at position 964 (T964) is a Phosphothreonine. The NPXY motif motif lies at 989 to 992 (NPAY). Y992 is subject to Phosphotyrosine. Composition is skewed to pro residues over residues 1002–1017 (LLPP…PVPP), 1054–1065 (LPPPDFPPPPLP), and 1093–1110 (GPPP…PGPS). At S1137 the chain carries Phosphoserine. Residues 1140–1178 (DYAPAGPGRSVLLPGPLELQPPRGLPSDYGRPLSFPPPR) are disordered. Phosphotyrosine is present on residues Y1141 and Y1168. In terms of domain architecture, SAM spans 1210–1264 (WLRAIGLERYEEGLVHNGWDDLEFLSDITEEDLEEAGVQDPAHKRLLLDTLQLSK). At S1263 the chain carries Phosphoserine.

It belongs to the inositol 1,4,5-trisphosphate 5-phosphatase family. Interacts with tyrosine phosphorylated form of SHC1. Interacts with EGFR. Upon stimulation by the EGF signaling pathway, it forms a complex with SHC1 and EGFR. Interacts with cytoskeletal protein SORBS3/vinexin, promoting its localization to the periphery of cells. Forms a complex with filamin (FLNA or FLNB), actin, GPIb (GP1BA or GP1BB) that regulates cortical and submembraneous actin. Interacts with c-Met/MET, when c-Met/MET is phosphorylated on 'Tyr-1356'. Interacts with p130Cas/BCAR1. Interacts with CENTD3/ARAP3 via its SAM domain. Interacts with c-Cbl/CBL and CAP/SORBS1. Interacts with activated EPHA2 receptor. Interacts with receptor FCGR2A. Interacts with receptor FCGR2B. Interacts with tyrosine kinase ABL1. Interacts with tyrosine kinase TEC. Interacts with CSF1R. Interacts (via N-terminus) with SH3YL1 (via SH3 domain). Interacts with FCRL6 (tyrosine phosphorylated form). Interacts (via SH2 domain) with tyrosine phosphorylated KLRC1 (via ITIM). Interacts with NEDD9/HEF1. Tyrosine phosphorylated by the members of the SRC family after exposure to a diverse array of extracellular stimuli such as insulin, growth factors such as EGF or PDGF, chemokines, integrin ligands and hypertonic and oxidative stress. May be phosphorylated upon IgG receptor FCGR2B-binding. Phosphorylated at Tyr-992 following cell attachment and spreading. Phosphorylated at Tyr-1168 following EGF signaling pathway stimulation. Phosphorylated at Thr-964 in response to PDGF.

It localises to the cytoplasm. The protein resides in the cytosol. It is found in the membrane. The protein localises to the cell projection. Its subcellular location is the filopodium. It localises to the lamellipodium. The protein resides in the basal cell membrane. It is found in the nucleus. The protein localises to the nucleus speckle. Its subcellular location is the cytoskeleton. It localises to the spindle pole. The enzyme catalyses a 1,2-diacyl-sn-glycero-3-phospho-(1D-myo-inositol-3,4,5-trisphosphate) + H2O = a 1,2-diacyl-sn-glycero-3-phospho-(1D-myo-inositol-3,4-bisphosphate) + phosphate. The catalysed reaction is 1,2-dioctanoyl-sn-glycero-3-phospho-(1D-myo-inositol-3,4,5-trisphosphate) + H2O = 1,2-dioctanoyl-sn-glycero-3-phospho-(1D-myo-inositol-3,4-bisphosphate) + phosphate. It catalyses the reaction 1,2-dihexadecanoyl-sn-glycero-3-phospho-(1D-myo-inositol-3,4,5-trisphosphate) + H2O = 1,2-dihexadecanoyl-sn-glycero-3-phospho-(1D-myo-inositol-3,4-bisphosphate) + phosphate. Activated upon translocation to the sites of synthesis of PtdIns(3,4,5)P3 in the membrane. Enzymatic activity is enhanced in the presence of phosphatidylserine. Its function is as follows. Phosphatidylinositol (PtdIns) phosphatase that specifically hydrolyzes the 5-phosphate of phosphatidylinositol-3,4,5-trisphosphate (PtdIns(3,4,5)P3) to produce PtdIns(3,4)P2, thereby negatively regulating the PI3K (phosphoinositide 3-kinase) pathways. Required for correct mitotic spindle orientation and therefore progression of mitosis. Plays a central role in regulation of PI3K-dependent insulin signaling, although the precise molecular mechanisms and signaling pathways remain unclear. While overexpression reduces both insulin-stimulated MAP kinase and Akt activation, its absence does not affect insulin signaling or GLUT4 trafficking. Confers resistance to dietary obesity. May act by regulating AKT2, but not AKT1, phosphorylation at the plasma membrane. Part of a signaling pathway that regulates actin cytoskeleton remodeling. Required for the maintenance and dynamic remodeling of actin structures as well as in endocytosis, having a major impact on ligand-induced EGFR internalization and degradation. Participates in regulation of cortical and submembraneous actin by hydrolyzing PtdIns(3,4,5)P3 thereby regulating membrane ruffling. Regulates cell adhesion and cell spreading. Required for HGF-mediated lamellipodium formation, cell scattering and spreading. Acts as a negative regulator of EPHA2 receptor endocytosis by inhibiting via PI3K-dependent Rac1 activation. Acts as a regulator of neuritogenesis by regulating PtdIns(3,4,5)P3 level and is required to form an initial protrusive pattern, and later, maintain proper neurite outgrowth. Acts as a negative regulator of the FC-gamma-RIIA receptor (FCGR2A). Mediates signaling from the FC-gamma-RIIB receptor (FCGR2B), playing a central role in terminating signal transduction from activating immune/hematopoietic cell receptor systems. Involved in EGF signaling pathway. Upon stimulation by EGF, it is recruited by EGFR and dephosphorylates PtdIns(3,4,5)P3. Plays a negative role in regulating the PI3K-PKB pathway, possibly by inhibiting PKB activity. Down-regulates Fc-gamma-R-mediated phagocytosis in macrophages independently of INPP5D/SHIP1. In macrophages, down-regulates NF-kappa-B-dependent gene transcription by regulating macrophage colony-stimulating factor (M-CSF)-induced signaling. Plays a role in the localization of AURKA and NEDD9/HEF1 to the basolateral membrane at interphase in polarized cysts, thereby mediates cell cycle homeostasis, cell polarization and cilia assembly. Additionally promotion of cilia growth is also facilitated by hydrolysis of (PtdIns(3,4,5)P3) to PtdIns(3,4)P2. Promotes formation of apical membrane-initiation sites during the initial stages of lumen formation via Rho family-induced actin filament organization and CTNNB1 localization to cell-cell contacts. May also hydrolyze PtdIns(1,3,4,5)P4, and could thus affect the levels of the higher inositol polyphosphates like InsP6. Involved in endochondral ossification. This chain is Phosphatidylinositol 3,4,5-trisphosphate 5-phosphatase 2, found in Canis lupus familiaris (Dog).